The sequence spans 57 residues: Large ribosomal subunit protein bL32c (57 aa).

Belongs to the bacterial ribosomal protein bL32 family.

The protein localises to the plastid. It is found in the chloroplast. This chain is Large ribosomal subunit protein bL32c, found in Phalaenopsis aphrodite subsp. formosana (Moth orchid).